The chain runs to 251 residues: Triosephosphate isomerase (251 aa).

Residue 9-11 coordinates substrate; that stretch reads NWK. The active-site Electrophile is His-95. The active-site Proton acceptor is Glu-167. Substrate is bound by residues Gly-173, Ser-213, and 234-235; that span reads GG. At Ser-213 the chain carries Phosphoserine.

It belongs to the triosephosphate isomerase family. Homodimer.

The protein resides in the cytoplasm. It carries out the reaction D-glyceraldehyde 3-phosphate = dihydroxyacetone phosphate. Its pathway is carbohydrate biosynthesis; gluconeogenesis. The protein operates within carbohydrate degradation; glycolysis; D-glyceraldehyde 3-phosphate from glycerone phosphate: step 1/1. Its function is as follows. Involved in the gluconeogenesis. Catalyzes stereospecifically the conversion of dihydroxyacetone phosphate (DHAP) to D-glyceraldehyde-3-phosphate (G3P). The protein is Triosephosphate isomerase of Bacillus anthracis.